We begin with the raw amino-acid sequence, 124 residues long: uncharacterized protein (124 aa).

Transmembrane regions (helical) follow at residues 13–33 (LIQI…VLQL), 43–63 (GLFW…PEFF), and 71–91 (GVGR…FYLI).

To M.thermoautotrophicum MTH137.

It localises to the cell membrane. This is an uncharacterized protein from Methanocaldococcus jannaschii (strain ATCC 43067 / DSM 2661 / JAL-1 / JCM 10045 / NBRC 100440) (Methanococcus jannaschii).